We begin with the raw amino-acid sequence, 284 residues long: Avenin-like b8 (284 aa).

The N-terminal stretch at Met-1–Ala-18 is a signal peptide.

This sequence belongs to the prolamin family. Contains disulfide bonds.

Functionally, seed storage protein. Might be integrated via inter-chain disulfide bonds within the glutenin polymer. The sequence is that of Avenin-like b8 from Triticum aestivum (Wheat).